A 138-amino-acid polypeptide reads, in one-letter code: Cysteine desulfuration protein SufE (138 aa).

Residue cysteine 51 is the Cysteine persulfide intermediate of the active site.

It belongs to the SufE family. In terms of assembly, homodimer. Interacts with SufS.

It is found in the cytoplasm. It functions in the pathway cofactor biosynthesis; iron-sulfur cluster biosynthesis. In terms of biological role, participates in cysteine desulfuration mediated by SufS. Cysteine desulfuration mobilizes sulfur from L-cysteine to yield L-alanine and constitutes an essential step in sulfur metabolism for biosynthesis of a variety of sulfur-containing biomolecules. Functions as a sulfur acceptor for SufS, by mediating the direct transfer of the sulfur atom from the S-sulfanylcysteine of SufS, an intermediate product of cysteine desulfuration process. This chain is Cysteine desulfuration protein SufE, found in Escherichia coli O45:K1 (strain S88 / ExPEC).